The primary structure comprises 132 residues: Vesicle transport protein GOT1A (132 aa).

Residues 1–16 (MISITEWQKIGVGTTG) are Cytoplasmic-facing. A helical membrane pass occupies residues 17-37 (FGIFFILFGMLLYFDSVLLAF). The Lumenal portion of the chain corresponds to 38 to 39 (GN). Residues 40-60 (LLFLTGLSLIIGLRRTFSFFF) form a helical membrane-spanning segment. Residues 61-68 (QRHKFKGT) lie on the Cytoplasmic side of the membrane. A helical transmembrane segment spans residues 69–89 (SFFLGGVVIVLLRWPLLGMCL). At 90-100 (ETYGFFSLFRG) the chain is on the lumenal side. A helical membrane pass occupies residues 101–121 (FFPVAFGFLGSASNIPFLSAL). Residues 122–132 (FQRLQGTSSMV) are Cytoplasmic-facing.

This sequence belongs to the GOT1 family.

The protein localises to the golgi apparatus membrane. Its function is as follows. May be involved in fusion of ER-derived transport vesicles with the Golgi complex. This Bos taurus (Bovine) protein is Vesicle transport protein GOT1A.